The primary structure comprises 913 residues: ER degradation-enhancing alpha-mannosidase-like protein 3 (913 aa).

Residues 1-15 form the signal peptide; the sequence is MGCPAVEARRWGDMW. An N-linked (GlcNAc...) asparagine glycan is attached at Asn-104. Residue Glu-132 is the Proton donor of the active site. The N-linked (GlcNAc...) asparagine glycan is linked to Asn-181. Asp-279 is a catalytic residue. Catalysis depends on Glu-373, which acts as the Proton donor. Glu-391 is an active-site residue. Residue Thr-477 participates in Ca(2+) binding. Asn-497 carries N-linked (GlcNAc...) asparagine glycosylation. The region spanning 660–766 is the PA domain; it reads LSKHLAGAQG…KEGNIILDAI (107 aa). The N-linked (GlcNAc...) asparagine glycan is linked to Asn-797. Residues 823–895 are disordered; that stretch reads EESPVSQPEV…NKVQPMESIL (73 aa). Residues 826–839 show a composition bias toward low complexity; that stretch reads PVSQPEVPSSDSPS. Residues 843-866 show a composition bias toward basic and acidic residues; the sequence is RTSERDITPESQEHKTEETEHSPK. The short motif at 910-913 is the Prevents secretion from ER element; the sequence is KDEL.

This sequence belongs to the glycosyl hydrolase 47 family. Ca(2+) is required as a cofactor.

The protein localises to the endoplasmic reticulum lumen. The enzyme catalyses N(4)-(alpha-D-Man-(1-&gt;2)-alpha-D-Man-(1-&gt;2)-alpha-D-Man-(1-&gt;3)-[alpha-D-Man-(1-&gt;2)-alpha-D-Man-(1-&gt;3)-[alpha-D-Man-(1-&gt;2)-alpha-D-Man-(1-&gt;6)]-alpha-D-Man-(1-&gt;6)]-beta-D-Man-(1-&gt;4)-beta-D-GlcNAc-(1-&gt;4)-beta-D-GlcNAc)-L-asparaginyl-[protein] (N-glucan mannose isomer 9A1,2,3B1,2,3) + 4 H2O = N(4)-(alpha-D-Man-(1-&gt;3)-[alpha-D-Man-(1-&gt;3)-[alpha-D-Man-(1-&gt;6)]-alpha-D-Man-(1-&gt;6)]-beta-D-Man-(1-&gt;4)-beta-D-GlcNAc-(1-&gt;4)-beta-D-GlcNAc)-L-asparaginyl-[protein] (N-glucan mannose isomer 5A1,2) + 4 beta-D-mannose. The catalysed reaction is N(4)-(alpha-D-Man-(1-&gt;2)-alpha-D-Man-(1-&gt;2)-alpha-D-Man-(1-&gt;3)-[alpha-D-Man-(1-&gt;3)-[alpha-D-Man-(1-&gt;2)-alpha-D-Man-(1-&gt;6)]-alpha-D-Man-(1-&gt;6)]-beta-D-Man-(1-&gt;4)-beta-D-GlcNAc-(1-&gt;4)-beta-D-GlcNAc)-L-asparaginyl-[protein] (N-glucan mannose isomer 8A1,2,3B1,3) + 3 H2O = N(4)-(alpha-D-Man-(1-&gt;3)-[alpha-D-Man-(1-&gt;3)-[alpha-D-Man-(1-&gt;6)]-alpha-D-Man-(1-&gt;6)]-beta-D-Man-(1-&gt;4)-beta-D-GlcNAc-(1-&gt;4)-beta-D-GlcNAc)-L-asparaginyl-[protein] (N-glucan mannose isomer 5A1,2) + 3 beta-D-mannose. It functions in the pathway protein modification; protein glycosylation. Its function is as follows. May be involved in endoplasmic reticulum-associated degradation (ERAD). The polypeptide is ER degradation-enhancing alpha-mannosidase-like protein 3 (edem3) (Xenopus laevis (African clawed frog)).